A 310-amino-acid polypeptide reads, in one-letter code: Thiamine-monophosphate kinase (310 aa).

4 residues coordinate Mg(2+): Asp26, Thr40, Ser41, and Asp42. Asp49 contacts substrate. Mg(2+)-binding residues include Asp70 and Asp118. Residues Gly117–Asp118 and Arg141 contribute to the ATP site. Mg(2+) is bound at residue Asp202. Ser204 provides a ligand contact to ATP. Asp205 lines the Mg(2+) pocket. 2 residues coordinate substrate: Glu251 and Trp299.

This sequence belongs to the thiamine-monophosphate kinase family.

It carries out the reaction thiamine phosphate + ATP = thiamine diphosphate + ADP. It functions in the pathway cofactor biosynthesis; thiamine diphosphate biosynthesis; thiamine diphosphate from thiamine phosphate: step 1/1. Its function is as follows. Catalyzes the ATP-dependent phosphorylation of thiamine-monophosphate (TMP) to form thiamine-pyrophosphate (TPP), the active form of vitamin B1. The chain is Thiamine-monophosphate kinase from Pyrococcus abyssi (strain GE5 / Orsay).